The sequence spans 345 residues: L-threonine 3-dehydrogenase (345 aa).

Residue cysteine 42 coordinates Zn(2+). Residues threonine 44 and histidine 47 each act as charge relay system in the active site. Zn(2+)-binding residues include histidine 67, glutamate 68, cysteine 97, cysteine 100, cysteine 103, and cysteine 111. Residues isoleucine 179, aspartate 199, arginine 204, 266 to 268 (LGI), and 290 to 291 (IY) each bind NAD(+).

Belongs to the zinc-containing alcohol dehydrogenase family. As to quaternary structure, homotetramer. The cofactor is Zn(2+).

The protein localises to the cytoplasm. It carries out the reaction L-threonine + NAD(+) = (2S)-2-amino-3-oxobutanoate + NADH + H(+). Its pathway is amino-acid degradation; L-threonine degradation via oxydo-reductase pathway; glycine from L-threonine: step 1/2. Catalyzes the NAD(+)-dependent oxidation of L-threonine to 2-amino-3-ketobutyrate. The polypeptide is L-threonine 3-dehydrogenase (Rhizobium etli (strain CIAT 652)).